A 366-amino-acid chain; its full sequence is Uroporphyrinogen decarboxylase (366 aa).

Substrate is bound by residues 28-32 (RQAGR), Asp-78, Tyr-160, Thr-215, and His-333.

This sequence belongs to the uroporphyrinogen decarboxylase family. In terms of assembly, homodimer.

It localises to the cytoplasm. It carries out the reaction uroporphyrinogen III + 4 H(+) = coproporphyrinogen III + 4 CO2. It functions in the pathway porphyrin-containing compound metabolism; protoporphyrin-IX biosynthesis; coproporphyrinogen-III from 5-aminolevulinate: step 4/4. In terms of biological role, catalyzes the decarboxylation of four acetate groups of uroporphyrinogen-III to yield coproporphyrinogen-III. This is Uroporphyrinogen decarboxylase from Paraburkholderia phytofirmans (strain DSM 17436 / LMG 22146 / PsJN) (Burkholderia phytofirmans).